A 331-amino-acid chain; its full sequence is Ferrochelatase (331 aa).

Fe cation contacts are provided by histidine 187 and glutamate 286.

This sequence belongs to the ferrochelatase family.

The protein resides in the cytoplasm. The catalysed reaction is heme b + 2 H(+) = protoporphyrin IX + Fe(2+). The protein operates within porphyrin-containing compound metabolism; protoheme biosynthesis; protoheme from protoporphyrin-IX: step 1/1. Its function is as follows. Catalyzes the ferrous insertion into protoporphyrin IX. This is Ferrochelatase from Legionella pneumophila subsp. pneumophila (strain Philadelphia 1 / ATCC 33152 / DSM 7513).